Reading from the N-terminus, the 657-residue chain is Glycogen debranching enzyme (657 aa).

The active-site Nucleophile is Asp336. The active-site Proton donor is the Glu371. Residues 460–479 (ANGEENRDGTNNNYSNNHGK) form a disordered region.

Belongs to the glycosyl hydrolase 13 family.

It catalyses the reaction Hydrolysis of (1-&gt;6)-alpha-D-glucosidic linkages to branches with degrees of polymerization of three or four glucose residues in limit dextrin.. It functions in the pathway glycan degradation; glycogen degradation. Removes maltotriose and maltotetraose chains that are attached by 1,6-alpha-linkage to the limit dextrin main chain, generating a debranched limit dextrin. This Escherichia coli (strain SMS-3-5 / SECEC) protein is Glycogen debranching enzyme.